The chain runs to 504 residues: D-alanine--D-alanyl carrier protein ligase (504 aa).

152–153 is a binding site for ATP; sequence TS. Residue Asp-197 participates in D-alanine binding. 292-297 contributes to the ATP binding site; sequence NTYGPT. Residue Val-301 coordinates D-alanine. ATP-binding positions include Asp-383, 394–397, and Lys-492; that span reads YNGR. Position 492 (Lys-492) interacts with D-alanine.

Belongs to the ATP-dependent AMP-binding enzyme family. DltA subfamily.

It is found in the cytoplasm. It carries out the reaction holo-[D-alanyl-carrier protein] + D-alanine + ATP = D-alanyl-[D-alanyl-carrier protein] + AMP + diphosphate. It participates in cell wall biogenesis; lipoteichoic acid biosynthesis. Catalyzes the first step in the D-alanylation of lipoteichoic acid (LTA), the activation of D-alanine and its transfer onto the D-alanyl carrier protein (Dcp) DltC. In an ATP-dependent two-step reaction, forms a high energy D-alanyl-AMP intermediate, followed by transfer of the D-alanyl residue as a thiol ester to the phosphopantheinyl prosthetic group of the Dcp. D-alanylation of LTA plays an important role in modulating the properties of the cell wall in Gram-positive bacteria, influencing the net charge of the cell wall. This is D-alanine--D-alanyl carrier protein ligase from Bacillus cereus (strain Q1).